Here is a 486-residue protein sequence, read N- to C-terminus: Maternal protein exuperantia (486 aa).

Disordered regions lie at residues 202-233 and 386-477; these read NARVDNDNEADSNSSSADKHVKNGLQKERDEF and STIR…ISLP. Residues 218 to 233 show a composition bias toward basic and acidic residues; the sequence is ADKHVKNGLQKERDEF. The span at 387–397 shows a compositional bias: basic residues; the sequence is TIRRRNKRNTP. Composition is skewed to polar residues over residues 420-437 and 464-476; these read KSQSVSSVPDSTTKTPSP and SALNNTAPASISL.

Its function is as follows. Ensures the proper localization of the mRNA of the bicoid gene to the anterior regions of the oocyte thus playing a fundamental role in the establishment of the polarity of the oocyte. May bind the bcd mRNA. This Drosophila virilis (Fruit fly) protein is Maternal protein exuperantia (exu).